Consider the following 177-residue polypeptide: Early nodulin-like protein 15 (177 aa).

The first 24 residues, 1–24 (MASSSLLVTIFLCISVFFFSSVNA), serve as a signal peptide directing secretion. In terms of domain architecture, Phytocyanin spans 25–129 (NEVTVGGKSG…GQKLRLVVIT (105 aa)). Cysteines 83 and 117 form a disulfide. Asn84 is a glycosylation site (N-linked (GlcNAc...) asparagine). Residue Ser153 is the site of GPI-anchor amidated serine attachment. A propeptide spans 154–177 (GAAKLAGGFSVVFGLVLGLWAFFF) (removed in mature form).

Belongs to the early nodulin-like (ENODL) family. As to expression, mostly expressed in seedlings, siliques and flowers, and, to a lower extent, in roots, stems and seeds, but barely in leaves.

The protein localises to the cell membrane. Functionally, may act as a carbohydrate transporter. Required, together with ENODL11, ENODL12, ENODL13, ENODL14 and ENODL15, for male-female communication and pollen tube reception and burst at the synergid cell surface of the female gametophyte. This Arabidopsis thaliana (Mouse-ear cress) protein is Early nodulin-like protein 15.